The following is a 466-amino-acid chain: Fez family zinc finger protein 1 (466 aa).

Positions 34 to 49 match the Engrailed homology 1 repressor motif; that stretch reads PLAFSIERIMSRTPEP. 6 consecutive C2H2-type zinc fingers follow at residues 261 to 283, 289 to 311, 317 to 339, 345 to 367, 373 to 395, and 401 to 424; these read FTCE…MPVH, FVCK…KIIH, HKCN…TRIH, FVCE…KLTH, FKCN…MHTH, and FTCP…RKLH. The tract at residues 446–466 is disordered; it reads LPNREQSHTIIQSPQLQKSVY. Residues 453–466 show a composition bias toward polar residues; it reads HTIIQSPQLQKSVY.

It belongs to the krueppel C2H2-type zinc-finger protein family.

The protein resides in the nucleus. Functionally, transcription repressor. Involved in the development of the forebrain region. In Xenopus laevis (African clawed frog), this protein is Fez family zinc finger protein 1 (fezf1).